Consider the following 149-residue polypeptide: Transcriptional repressor NrdR (149 aa).

A zinc finger lies at 3-34 (CPFCSATDTKVIDSRLVSDGHQVRRRRQCLAC). The region spanning 49 to 139 (PKVIKSNGNR…VYRSFEDIKE (91 aa)) is the ATP-cone domain.

The protein belongs to the NrdR family. Zn(2+) is required as a cofactor.

Functionally, negatively regulates transcription of bacterial ribonucleotide reductase nrd genes and operons by binding to NrdR-boxes. The sequence is that of Transcriptional repressor NrdR from Aliivibrio salmonicida (strain LFI1238) (Vibrio salmonicida (strain LFI1238)).